A 648-amino-acid chain; its full sequence is Probable potassium transport system protein Kup 1 (648 aa).

12 consecutive transmembrane segments (helical) span residues 25–45 (LTLG…IYAF), 57–77 (IVAG…ILVV), 113–133 (LVMA…VITP), 153–173 (SVSR…LFLM), 184–204 (LFGP…LIHI), 219–239 (GVLF…AVFL), 263–283 (WLAI…AFAL), 312–332 (IPLV…VITG), 362–382 (IYLP…VLGF), 391–411 (AYGV…FLVV), 417–437 (WGWP…LFFF), and 446–466 (EGGW…VTWV).

Belongs to the HAK/KUP transporter (TC 2.A.72) family.

Its subcellular location is the cell inner membrane. The catalysed reaction is K(+)(in) + H(+)(in) = K(+)(out) + H(+)(out). Transport of potassium into the cell. Likely operates as a K(+):H(+) symporter. In Rhizorhabdus wittichii (strain DSM 6014 / CCUG 31198 / JCM 15750 / NBRC 105917 / EY 4224 / RW1) (Sphingomonas wittichii), this protein is Probable potassium transport system protein Kup 1.